Here is a 179-residue protein sequence, read N- to C-terminus: Monothiol glutaredoxin-S12, chloroplastic (179 aa).

The N-terminal 61 residues, 1 to 61 (MVAATVNLAN…WPPLRCSSVK (61 aa)), are a transit peptide targeting the chloroplast. Position 62 is an N-acetylalanine (A62). In terms of domain architecture, Glutaredoxin spans 75 to 176 (EETVKTTVAE…AILAEANGKN (102 aa)). C95 is a binding site for [2Fe-2S] cluster.

It belongs to the glutaredoxin family. CPYC subfamily.

The protein resides in the plastid. Its subcellular location is the chloroplast. In terms of biological role, may only reduce GSH-thiol disulfides, but not protein disulfides. In Arabidopsis thaliana (Mouse-ear cress), this protein is Monothiol glutaredoxin-S12, chloroplastic (GRXS12).